A 344-amino-acid polypeptide reads, in one-letter code: 4'-phosphopantetheinyl transferase NpgA (344 aa).

It belongs to the P-Pant transferase superfamily.

It carries out the reaction apo-[ACP] + CoA = holo-[ACP] + adenosine 3',5'-bisphosphate + H(+). In terms of biological role, transfers the 4'-phosphopantetheine moiety from coenzyme A to a Ser of an acyl-carrier-protein. The enzyme is able to transfer the cofactor to a broad range of enzymes with acyl- or peptidyl-carrier protein domains. Required for primary biological processes such as growth and asexual/sexual development, and activates target enzymes involved in the synthesis of metabolites such as fatty acids, polyketides and nonribosomal peptides, lysine, siderophore, penicillin, sterigmatocystin, shamixantone, dehydroaustinol, and pigments. The chain is 4'-phosphopantetheinyl transferase NpgA (npgA) from Emericella nidulans (strain FGSC A4 / ATCC 38163 / CBS 112.46 / NRRL 194 / M139) (Aspergillus nidulans).